A 558-amino-acid chain; its full sequence is Formate--tetrahydrofolate ligase (558 aa).

66–73 lines the ATP pocket; it reads TPAGEGKT.

Belongs to the formate--tetrahydrofolate ligase family.

It catalyses the reaction (6S)-5,6,7,8-tetrahydrofolate + formate + ATP = (6R)-10-formyltetrahydrofolate + ADP + phosphate. Its pathway is one-carbon metabolism; tetrahydrofolate interconversion. The polypeptide is Formate--tetrahydrofolate ligase (Clostridioides difficile (strain 630) (Peptoclostridium difficile)).